Here is a 104-residue protein sequence, read N- to C-terminus: Large ribosomal subunit protein uL24 (104 aa).

The protein belongs to the universal ribosomal protein uL24 family. As to quaternary structure, part of the 50S ribosomal subunit.

Functionally, one of two assembly initiator proteins, it binds directly to the 5'-end of the 23S rRNA, where it nucleates assembly of the 50S subunit. Its function is as follows. One of the proteins that surrounds the polypeptide exit tunnel on the outside of the subunit. The sequence is that of Large ribosomal subunit protein uL24 from Brevibacillus brevis (strain 47 / JCM 6285 / NBRC 100599).